The chain runs to 279 residues: Phosphatidylglycerol--prolipoprotein diacylglyceryl transferase (279 aa).

Transmembrane regions (helical) follow at residues 22-42 (SAHW…WSSI), 58-78 (ILYF…VIFY), 89-109 (FIFK…GSII), 128-148 (FLVP…FING), 195-215 (ISQL…LNIF), 223-243 (GYMS…AEFF), and 256-276 (YISL…ILII). Arginine 141 contacts a 1,2-diacyl-sn-glycero-3-phospho-(1'-sn-glycerol).

Belongs to the Lgt family.

The protein resides in the cell membrane. It carries out the reaction L-cysteinyl-[prolipoprotein] + a 1,2-diacyl-sn-glycero-3-phospho-(1'-sn-glycerol) = an S-1,2-diacyl-sn-glyceryl-L-cysteinyl-[prolipoprotein] + sn-glycerol 1-phosphate + H(+). It participates in protein modification; lipoprotein biosynthesis (diacylglyceryl transfer). Catalyzes the transfer of the diacylglyceryl group from phosphatidylglycerol to the sulfhydryl group of the N-terminal cysteine of a prolipoprotein, the first step in the formation of mature lipoproteins. In Wigglesworthia glossinidia brevipalpis, this protein is Phosphatidylglycerol--prolipoprotein diacylglyceryl transferase.